A 290-amino-acid chain; its full sequence is Shikimate kinase (290 aa).

ATP is bound at residue Pro81–Ala91.

This sequence belongs to the GHMP kinase family. Archaeal shikimate kinase subfamily.

The protein localises to the cytoplasm. It catalyses the reaction shikimate + ATP = 3-phosphoshikimate + ADP + H(+). The protein operates within metabolic intermediate biosynthesis; chorismate biosynthesis; chorismate from D-erythrose 4-phosphate and phosphoenolpyruvate: step 5/7. This Methanocella arvoryzae (strain DSM 22066 / NBRC 105507 / MRE50) protein is Shikimate kinase.